The sequence spans 471 residues: Putative multidrug resistance protein MdtD (471 aa).

The next 13 membrane-spanning stretches (helical) occupy residues 12-32 (LWIVAFGFFMQSLDTTIVNTA), 49-69 (MVIVSYVLTVAVMLPASGWMA), 72-92 (IGVRNIFFTAIVLFTLGSLFC), 101-123 (LVMSRVLQGVGGAMMVPVGRLTV), 138-158 (FVTLPGQVGPLLGPALGGILV), 165-185 (WIFLINLPVGIVGAIATLWLM), 195-215 (FDIFGFVLLAAGMATLTLALD), 220-240 (LGISTLTLCLLIVIGIVSILW), 265-285 (IGLFGSFVGRLGSGMLPFMTP), 286-306 (VFLQIGLGFSPFHAGLMMIPM), 342-362 (LVFMAVALMGWYYVLPLVLFF), 393-413 (LLSMIMQLSMSVGVTVAGLLL), and 431-451 (VFLYTYLSMAVIIALPALIFA).

The protein belongs to the major facilitator superfamily. TCR/Tet family.

The protein resides in the cell inner membrane. The chain is Putative multidrug resistance protein MdtD from Enterobacter sp. (strain 638).